A 246-amino-acid polypeptide reads, in one-letter code: MTMDKSELVQKAKLAEQAERYDDMAAAMKAVTEQGHELSNEERNLLSVAYKNVVGARRSSWRVISSIEQKTERNEKKQQMGKEYREKIEAELQDICNDVLELLDKYLILNATQAESKVFYLKMKGDYFRYLSEVASGENKQTTVSNSQQAYQEAFEISKKEMQPTHPIRLGLALNFSVFYYEILNSPEKACSLAKTAFDEAIAELDTLNEESYKDSTLIMQLLRDNLTLWTSENQGDEGDAGEGEN.

Position 1 is an N-acetylmethionine (M1). Position 2 is an N-acetylthreonine; in 14-3-3 protein beta/alpha, N-terminally processed (T2). T2 bears the Phosphothreonine mark. At K5 the chain carries N6-acetyllysine. N6-acetyllysine; alternate is present on K51. A Glycyl lysine isopeptide (Lys-Gly) (interchain with G-Cter in SUMO2); alternate cross-link involves residue K51. The residue at position 60 (S60) is a Phosphoserine. Position 70 is an N6-acetyllysine (K70). A 3'-nitrotyrosine mark is found at Y84 and Y106. An N6-acetyllysine modification is found at K117. Residues S186 and S232 each carry the phosphoserine modification.

The protein belongs to the 14-3-3 family. In terms of assembly, homodimer. Interacts with SAMSN1 and PRKCE. Interacts with AKAP13. Interacts with SSH1 and TORC2/CRTC2. Interacts with ABL1; the interaction results in cytoplasmic location of ABL1 and inhibition of cABL-mediated apoptosis. Interacts with ROR2 (dimer); the interaction results in phosphorylation of YWHAB on tyrosine residues. Interacts with GAB2. Interacts with YAP1 (phosphorylated form). Interacts with the phosphorylated (by AKT1) form of SRPK2. Interacts with PKA-phosphorylated AANAT. Interacts with MYO1C. Interacts with SIRT2. Interacts with the 'Thr-369' phosphorylated form of DAPK2. Interacts with PI4KB, TBC1D22A and TBC1D22B. Interacts with the 'Ser-1134' and 'Ser-1161' phosphorylated form of SOS1. Interacts (via phosphorylated form) with YWHAB; this interaction occurs in a protein kinase AKT1-dependent manner. Interacts with SLITRK1. Interacts with SYNPO2 (phosphorylated form); YWHAB competes with ACTN2 for interaction with SYNPO2. Interacts with RIPOR2 (via phosphorylated form); this interaction occurs in a chemokine-dependent manner and does not compete for binding of RIPOR2 with RHOA nor blocks inhibition of RIPOR2-mediated RHOA activity. Interacts with MARK2 and MARK3. Interacts with TESK1; the interaction is dependent on the phosphorylation of TESK1 'Ser-439' and inhibits TESK1 kinase activity. Interacts with MEFV. Interacts with HDAC4. Interacts with ADAM22 (via C-terminus). Post-translationally, isoform alpha differs from isoform beta in being phosphorylated. Phosphorylated on Ser-60 by protein kinase C delta type catalytic subunit in a sphingosine-dependent fashion. Isoform Short contains a N-acetylmethionine at position 1.

The protein localises to the cytoplasm. The protein resides in the melanosome. Functionally, adapter protein implicated in the regulation of a large spectrum of both general and specialized signaling pathways. Binds to a large number of partners, usually by recognition of a phosphoserine or phosphothreonine motif. Binding generally results in the modulation of the activity of the binding partner. Negative regulator of osteogenesis. Blocks the nuclear translocation of the phosphorylated form (by AKT1) of SRPK2 and antagonizes its stimulatory effect on cyclin D1 expression resulting in blockage of neuronal apoptosis elicited by SRPK2. Negative regulator of signaling cascades that mediate activation of MAP kinases via AKAP13. This Mus musculus (Mouse) protein is 14-3-3 protein beta/alpha (Ywhab).